Here is a 96-residue protein sequence, read N- to C-terminus: UPF0235 protein MK0273 (96 aa).

This sequence belongs to the UPF0235 family.

The sequence is that of UPF0235 protein MK0273 from Methanopyrus kandleri (strain AV19 / DSM 6324 / JCM 9639 / NBRC 100938).